The primary structure comprises 189 residues: Peptidyl-tRNA hydrolase (189 aa).

Tyr-16 contacts tRNA. His-21 functions as the Proton acceptor in the catalytic mechanism. TRNA contacts are provided by Phe-67, Asn-69, and Asn-115.

It belongs to the PTH family. As to quaternary structure, monomer.

The protein localises to the cytoplasm. It carries out the reaction an N-acyl-L-alpha-aminoacyl-tRNA + H2O = an N-acyl-L-amino acid + a tRNA + H(+). Hydrolyzes ribosome-free peptidyl-tRNAs (with 1 or more amino acids incorporated), which drop off the ribosome during protein synthesis, or as a result of ribosome stalling. In terms of biological role, catalyzes the release of premature peptidyl moieties from peptidyl-tRNA molecules trapped in stalled 50S ribosomal subunits, and thus maintains levels of free tRNAs and 50S ribosomes. The polypeptide is Peptidyl-tRNA hydrolase (Legionella pneumophila (strain Lens)).